We begin with the raw amino-acid sequence, 197 residues long: MTFRLGLTGSIGMGKSTTAQMFVDEGCALWDADAAVHRLYSSGGAAVAPMRAAFPDAVVDDAVSRPVLKHIIAEDPQALKRIEAIVHPLVAEDRARFRDSATADILVFDIPLLFETGGEAAMDAVACVSIPPEEQKARVMARGTMTEAQFEQIRAKQMPNEEKCARSDFVIVTDTLDHARAQVQDIVRQIRAGNIHA.

Residues 4–197 enclose the DPCK domain; sequence RLGLTGSIGM…RQIRAGNIHA (194 aa). 12–17 contributes to the ATP binding site; sequence GMGKST.

The protein belongs to the CoaE family.

The protein localises to the cytoplasm. It carries out the reaction 3'-dephospho-CoA + ATP = ADP + CoA + H(+). Its pathway is cofactor biosynthesis; coenzyme A biosynthesis; CoA from (R)-pantothenate: step 5/5. Catalyzes the phosphorylation of the 3'-hydroxyl group of dephosphocoenzyme A to form coenzyme A. This Ruegeria pomeroyi (strain ATCC 700808 / DSM 15171 / DSS-3) (Silicibacter pomeroyi) protein is Dephospho-CoA kinase.